The sequence spans 258 residues: Regulatory protein RecX (258 aa).

This sequence belongs to the RecX family.

The protein localises to the cytoplasm. In terms of biological role, modulates RecA activity. The sequence is that of Regulatory protein RecX from Streptococcus uberis (strain ATCC BAA-854 / 0140J).